Reading from the N-terminus, the 265-residue chain is Putative hydro-lyase PA14_37210 (265 aa).

This sequence belongs to the D-glutamate cyclase family.

This chain is Putative hydro-lyase PA14_37210, found in Pseudomonas aeruginosa (strain UCBPP-PA14).